A 506-amino-acid chain; its full sequence is Maturase K (506 aa).

The protein belongs to the intron maturase 2 family. MatK subfamily.

The protein localises to the plastid. The protein resides in the chloroplast. Usually encoded in the trnK tRNA gene intron. Probably assists in splicing its own and other chloroplast group II introns. The sequence is that of Maturase K from Crataegus monogyna (Hawthorn).